A 139-amino-acid chain; its full sequence is Large ribosomal subunit protein uL16 (139 aa).

This sequence belongs to the universal ribosomal protein uL16 family. Part of the 50S ribosomal subunit.

Binds 23S rRNA and is also seen to make contacts with the A and possibly P site tRNAs. The sequence is that of Large ribosomal subunit protein uL16 from Koribacter versatilis (strain Ellin345).